The primary structure comprises 100 residues: Small ribosomal subunit protein bS6 (100 aa).

It belongs to the bacterial ribosomal protein bS6 family.

Functionally, binds together with bS18 to 16S ribosomal RNA. The chain is Small ribosomal subunit protein bS6 from Tropheryma whipplei (strain Twist) (Whipple's bacillus).